Here is a 134-residue protein sequence, read N- to C-terminus: Complexin-2 (134 aa).

A disordered region spans residues 1-114 (MDFVMKQALG…CGDEEEEEEE (114 aa)). The segment covering 15–85 (DMGKMLGGEE…EEKEAEEKAA (71 aa)) has biased composition (basic and acidic residues). Residues 28–84 (PDAQKKEEERQEALRQQEEERKAKHARMEAEREKVRQQIRDKYGLKKKEEKEAEEKA) adopt a coiled-coil conformation. Residues 41 to 97 (LRQQEEERKAKHARMEAEREKVRQQIRDKYGLKKKEEKEAEEKAALEQPCEGSLTRP) form an interaction with the SNARE complex region. A Phosphoserine modification is found at S93.

It belongs to the complexin/synaphin family. In terms of assembly, binds to the SNARE core complex containing SNAP25, VAMP2 and STX1A. Nervous system. Also present in adrenal chromaffin cells (at protein level).

It is found in the cytoplasm. The protein localises to the cytosol. It localises to the presynapse. Its subcellular location is the nucleus. The protein resides in the perikaryon. Its function is as follows. Negatively regulates the formation of synaptic vesicle clustering at active zone to the presynaptic membrane in postmitotic neurons. Positively regulates a late step in exocytosis of various cytoplasmic vesicles, such as synaptic vesicles and other secretory vesicles. Also involved in mast cell exocytosis. The chain is Complexin-2 (CPLX2) from Bos taurus (Bovine).